The following is a 326-amino-acid chain: Nucleotide sugar transporter SLC35D2 (326 aa).

Residues 1-15 (MEEPNAAPLPSRLAR) lie on the Extracellular side of the membrane. Residues 16–36 (LLSALFYGTCSFLIVLVNKAL) form a helical membrane-spanning segment. Over 37–41 (LTTYG) the chain is Cytoplasmic. The chain crosses the membrane as a helical span at residues 42–62 (FPSPIVLGIGQMATTIMILYV). Over 63–130 (FKLNKIIHFP…LLEAIILGTQ (68 aa)) the chain is Extracellular. The helical transmembrane segment at 131–151 (YSLNIILSVLAIVLGAFIAAG) threads the bilayer. Residues 152-155 (SDLT) are Cytoplasmic-facing. The chain crosses the membrane as a helical span at residues 156-176 (FNLEGYVFVFLNDIFTAANGV). Residues 177–189 (YTKQKMDPKELGK) are Extracellular-facing. Residues 190 to 210 (YGVLFYNACFMLIPTVIISVS) traverse the membrane as a helical segment. Residues 211 to 225 (TGDFQQATEFRHWKN) lie on the Cytoplasmic side of the membrane. Residues 226-246 (VLFIIQFLLSCLLGFLLMYST) form a helical membrane-spanning segment. Residues 247-253 (ALCSYYN) are Extracellular-facing. A helical membrane pass occupies residues 254 to 276 (SALTTAVVGAIKNVSVAYIGMLV). Residues 277–280 (GGDY) lie on the Cytoplasmic side of the membrane. The helical transmembrane segment at 281 to 303 (IFSLLNFIGLNICMAGGLRYSFL) threads the bilayer. Residues 304-326 (TLSSQLKPKQPVDEESIPLDLKS) are Extracellular-facing.

This sequence belongs to the TPT transporter family. SLC35D subfamily.

The protein localises to the golgi apparatus membrane. It carries out the reaction UMP(out) + UDP-N-acetyl-alpha-D-glucosamine(in) = UMP(in) + UDP-N-acetyl-alpha-D-glucosamine(out). It catalyses the reaction UMP(out) + UDP-alpha-D-glucose(in) = UMP(in) + UDP-alpha-D-glucose(out). Its function is as follows. Nucleotide sugar antiporter transporting UDP-N-acetylglucosamine (UDP-GlcNAc) and UDP-glucose (UDP-Glc) from the cytosol into the lumen of the Golgi in exchange of UMP. By supplying UDP-N-acetylglucosamine, a donor substrate to heparan sulfate synthases, probably takes part in the synthesis of these glycoconjugates. The polypeptide is Nucleotide sugar transporter SLC35D2 (Mus musculus (Mouse)).